Here is a 605-residue protein sequence, read N- to C-terminus: Replication protein E1 (605 aa).

The short motif at 80–82 is the Nuclear localization signal element; the sequence is KRK. A phosphoserine; by host mark is found at Ser-85 and Ser-93. Positions 92-101 match the Nuclear export signal motif; sequence LSPQLESISL. The DNA-binding region stretch occupies residues 145–308; it reads QGTKGLGIVK…TLINHQSANA (164 aa). Positions 407–557 constitute an SF3 helicase domain; the sequence is INFIEFLTVF…FPLDANHKPQ (151 aa). 433-440 is a binding site for ATP; that stretch reads GPPDTGKS. A Glycyl lysine isopeptide (Lys-Gly) (interchain with G-Cter in SUMO) cross-link involves residue Lys-514.

The protein belongs to the papillomaviridae E1 protein family. As to quaternary structure, can form hexamers. Interacts with E2 protein; this interaction increases E1 DNA binding specificity. Interacts with host DNA polymerase subunit POLA2. Interacts with host single stranded DNA-binding protein RPA1. Interacts with host TOP1; this interaction stimulates the enzymatic activity of TOP1. Phosphorylated. Post-translationally, sumoylated.

The protein localises to the host nucleus. It catalyses the reaction Couples ATP hydrolysis with the unwinding of duplex DNA by translocating in the 3'-5' direction.. The enzyme catalyses ATP + H2O = ADP + phosphate + H(+). ATP-dependent DNA 3'-5' helicase required for initiation of viral DNA replication. It forms a complex with the viral E2 protein. The E1-E2 complex binds to the replication origin which contains binding sites for both proteins. During the initial step, a dimer of E1 interacts with a dimer of protein E2 leading to a complex that binds the viral origin of replication with high specificity. Then, a second dimer of E1 displaces the E2 dimer in an ATP-dependent manner to form the E1 tetramer. Following this, two E1 monomers are added to each half of the site, which results in the formation of two E1 trimers on the viral ori. Subsequently, two hexamers will be created. The double hexamer acts as a bi-directional helicase machinery and unwinds the viral DNA and then recruits the host DNA polymerase to start replication. This Homo sapiens (Human) protein is Replication protein E1.